The chain runs to 66 residues: Putative membrane protein insertion efficiency factor (66 aa).

The protein belongs to the UPF0161 family.

Its subcellular location is the cell inner membrane. Its function is as follows. Could be involved in insertion of integral membrane proteins into the membrane. This chain is Putative membrane protein insertion efficiency factor, found in Parasynechococcus marenigrum (strain WH8102).